Reading from the N-terminus, the 66-residue chain is Large ribosomal subunit protein bL33c (66 aa).

It belongs to the bacterial ribosomal protein bL33 family.

Its subcellular location is the plastid. It is found in the chloroplast. The sequence is that of Large ribosomal subunit protein bL33c from Cryptomeria japonica (Japanese cedar).